Reading from the N-terminus, the 243-residue chain is Small ribosomal subunit protein eS4 (243 aa).

Positions 43-105 (IPLIYIVRDY…TGEHYRVLPN (63 aa)) constitute an S4 RNA-binding domain.

It belongs to the eukaryotic ribosomal protein eS4 family. In terms of assembly, part of the 30S ribosomal subunit.

The sequence is that of Small ribosomal subunit protein eS4 from Thermococcus kodakarensis (strain ATCC BAA-918 / JCM 12380 / KOD1) (Pyrococcus kodakaraensis (strain KOD1)).